A 498-amino-acid polypeptide reads, in one-letter code: Type II secretion system protein E (498 aa).

Positions 394, 397, 425, and 428 each coordinate Zn(2+).

Belongs to the GSP E family. In terms of assembly, forms homooligomers; most probably hexamers. Interacts with OutL/GspL. The cofactor is Zn(2+).

The protein localises to the cell inner membrane. It carries out the reaction ATP + H2O + cellular proteinSide 1 = ADP + phosphate + cellular proteinSide 2.. ATPase component of the type II secretion system required for the energy-dependent secretion of extracellular factors such as proteases and toxins from the periplasm. Acts as a molecular motor to provide the energy that is required for assembly of the pseudopilus and the extrusion of substrates generated in the cytoplasm. This Dickeya dadantii (strain 3937) (Erwinia chrysanthemi (strain 3937)) protein is Type II secretion system protein E (outE).